The following is a 293-amino-acid chain: Ribosomal RNA small subunit methyltransferase H (293 aa).

Residues 32 to 34 (GGH), Asp51, Phe78, Asp99, and Gln106 each bind S-adenosyl-L-methionine. The disordered stretch occupies residues 272 to 293 (SDEEIKENPASRSAKLRVGRRI).

The protein belongs to the methyltransferase superfamily. RsmH family.

It localises to the cytoplasm. The catalysed reaction is cytidine(1402) in 16S rRNA + S-adenosyl-L-methionine = N(4)-methylcytidine(1402) in 16S rRNA + S-adenosyl-L-homocysteine + H(+). In terms of biological role, specifically methylates the N4 position of cytidine in position 1402 (C1402) of 16S rRNA. The protein is Ribosomal RNA small subunit methyltransferase H of Sulfurihydrogenibium sp. (strain YO3AOP1).